Here is a 441-residue protein sequence, read N- to C-terminus: Deoxyguanosinetriphosphate triphosphohydrolase-like protein (441 aa).

Residues Arg-62–Gly-255 enclose the HD domain.

Belongs to the dGTPase family. Type 2 subfamily.

This is Deoxyguanosinetriphosphate triphosphohydrolase-like protein (dgt) from Vibrio cholerae serotype O1 (strain ATCC 39541 / Classical Ogawa 395 / O395).